A 2151-amino-acid polypeptide reads, in one-letter code: MEGDERGVLLACVISGTLFTVFGSGSFWILWAVNWRPWRLYSWIFARKWPKVLQGPQLDILCGVLSLFAWIVVVSPIAILIGWGSWLIVILDRHIIGLAIIMAGTALLLAFYSIMLWWRTQWQSSRAVALLLLLGVALLCAYELCAVYVTAGAHASQQYSPSGFFFGVSAIALAINMLFICRMVFNGNGLDVDEYVRRAYKFAYSDCIEVGPVACLPEPPDPNELYPRQTSRASHLGLLYLGSLVVLLAYSVLYGLTARESRWLGGITSAAVIVLDWNIGACLYGFKLLQNRVLALFVAGISRLFLICFGIHYWYLGHCISYIFVASVLSGAAVSRHLSITDPSAARRDALQSTVIRLREGFRRKEQNSSSSSSDGCGSSIKRSSSIDAGHTGCTNEANRTAESCTADNLTRTGSSQEGINSDKSEESGRPSLGLRSSSCRSVVQEPEAGTSYFMDKVSDQNNTLVVCSSSGLDSQGYESSTSNSANQQLLDMNLALAFQDQLNNPRIASILKKKAKEGDLELTNLLQDKGLDPNFAVMLKEKNLDPTILALLQRSSLDADRDHRDNTDITIIDSNSVDNTLPNQISLSEELRLRGLEKWLKLSRLLLHHVAGTPERAWGLFSLVFILETIIVAIFRPKTITIINSSHQQFEFGFSVLLLSPVVCSIMAFLRSLQVEEMALTSKSRKYGFVAWLLSTSVGLSLSFLSKSSVLLGISLTVPLMAACLSIAVPIWMHNGYQFWVPQLSCGDQARDLRSPRIKGFILWICVVLFAGSVISLGAIISAKPLDDLKYKLFSARENNVTSPYTSSVYLGWAMSSGIALVVTAILPIVSWFATYRFSHSSAVCLMIFSVVLVAFCGTSYLEVVKSRDDQLPTKGDFLAALLPLACIPALLSLCCGMVKWKDDCWILSRGVYVFFSIGLLLLFGAIAAVIAVKPWTIGVSFLLVLFLMVVTIGVIHLWASNNFYLTRKQTSFVCFLALLLGLAAFLLGWHQDKAFAGASVGYFTFLSLLAGRALAVLLSPPIVVYSPRVLPVYVYDAHADCGKNVSAAFLVLYGIALATEGWGVVASLIIYPPFAGAAVSAITLVVAFGFAVSRPCLTLEMMEVAVRFLSKDTIVQAISRSATKTRNALSGTYSAPQRSASSAALLVGDPSAMRDKAGNFVLPRDDVMKLRDRLRNEERVAGSIFYKMQCRKGFRHEPPTNVDYRRDMCAHARVLALEEAIDTEWVYMWDKFGGYLLLLLGLTAKAERVQDEVRLRLFLDSIGFSDLSARKISKWKPEDRRQFEIIQESYLREKEMEEESLMQRREEEGRGKERRKALLEKEERKWKEIEASLIPSIPNAGSREAAAMAAAIRAVGGDSVLEDSFARERVSGIARRIRTAQLERRAQQTGISGAVCVLDDEPMISGKHCGQMDSSVCQSQKISFSVTAMIQSDSGPVCLFGTEFQKKVCWEILVAGSEQGIEAGQVGLRLITKGERQTTVAREWYIGATSITDGRWHTVTITIDADAGEATCYIDGGFDGYQNGLPLSIGSAIWEQGAEVWLGVRPPIDVDAFGRSDSDGVESKMHIMDVFLWGKCLSEEEAASLHAAIGMADLDMIDLSDDNWQWTDSPPRVDGWDSDPADVDLYDRDDVDWDGQYSSGRKRRSGRDFVMSVDSFARRHRKPRMETQEDINQRMRSVELAVKEALSARGDKQFTDQEFPPNDRSLFVDTQNPPSKLQVVSEWMRPDSIVKENGSDSRPCLFSGDANPSDVCQGRLGDCWFLSAVAVLTEVSRISEVIITPEYNEEGIYTVRFCIQGEWVPVVIDDWIPCESPGKPAFATSRKLNELWVSMVEKAYAKLHGSYEALEGGLVQDALVDLTGGAGEEIDLRSAQAQIDLASGRLWSQLLRFKQEGFLLGAGSPSGSDVHVSSSGIVQGHAYSVLQVREVDGHRLVQIRNPWANEVEWNGPWSDSSPEWTDRMKHKLKHVPQSKEGIFWMSWQDFQIHFRSIYVCRVYPREMRYSVNGQWRGYSAGGCQDYSSWHQNPQFRLRATGSDASLPIHVFITLTQGVGFSRTTPGFRNYQSSHDSQLFYIGLRILKTRGRRAAYNIFLHESVGGTDYVNSREISCEMVLDPDPKGYTIVPTTIHPGEEAPFVLSVFTKASIVLEAL.

The signal sequence occupies residues 1–32 (MEGDERGVLLACVISGTLFTVFGSGSFWILWA). Residues 33 to 69 (VNWRPWRLYSWIFARKWPKVLQGPQLDILCGVLSLFA) are Extracellular-facing. A helical membrane pass occupies residues 70–90 (WIVVVSPIAILIGWGSWLIVI). At 91–94 (LDRH) the chain is on the cytoplasmic side. Residues 95 to 115 (IIGLAIIMAGTALLLAFYSIM) form a helical membrane-spanning segment. Residues 116-126 (LWWRTQWQSSR) lie on the Extracellular side of the membrane. Residues 127–147 (AVALLLLLGVALLCAYELCAV) form a helical membrane-spanning segment. Topologically, residues 148-163 (YVTAGAHASQQYSPSG) are cytoplasmic. The chain crosses the membrane as a helical span at residues 164 to 184 (FFFGVSAIALAINMLFICRMV). The Extracellular segment spans residues 185-235 (FNGNGLDVDEYVRRAYKFAYSDCIEVGPVACLPEPPDPNELYPRQTSRASH). Residues 236–256 (LGLLYLGSLVVLLAYSVLYGL) traverse the membrane as a helical segment. The Cytoplasmic portion of the chain corresponds to 257 to 263 (TARESRW). A helical membrane pass occupies residues 264–284 (LGGITSAAVIVLDWNIGACLY). Residues 285 to 293 (GFKLLQNRV) lie on the Extracellular side of the membrane. Residues 294-314 (LALFVAGISRLFLICFGIHYW) traverse the membrane as a helical segment. Over 315 to 319 (YLGHC) the chain is Cytoplasmic. A helical transmembrane segment spans residues 320-340 (ISYIFVASVLSGAAVSRHLSI). Over 341 to 615 (TDPSAARRDA…LLLHHVAGTP (275 aa)) the chain is Extracellular. Disordered regions lie at residues 363–393 (RRKEQNSSSSSSDGCGSSIKRSSSIDAGHTG) and 405–442 (CTADNLTRTGSSQEGINSDKSEESGRPSLGLRSSSCRS). The segment covering 369 to 388 (SSSSSSDGCGSSIKRSSSID) has biased composition (low complexity). Over residues 405–420 (CTADNLTRTGSSQEGI) the composition is skewed to polar residues. Residues 430–442 (RPSLGLRSSSCRS) are compositionally biased toward low complexity. A helical membrane pass occupies residues 616–636 (ERAWGLFSLVFILETIIVAIF). Over 637–652 (RPKTITIINSSHQQFE) the chain is Cytoplasmic. A helical membrane pass occupies residues 653-673 (FGFSVLLLSPVVCSIMAFLRS). The Extracellular segment spans residues 674–686 (LQVEEMALTSKSR). A helical transmembrane segment spans residues 687-707 (KYGFVAWLLSTSVGLSLSFLS). The Cytoplasmic portion of the chain corresponds to 708–711 (KSSV). Residues 712-732 (LLGISLTVPLMAACLSIAVPI) form a helical membrane-spanning segment. Residues 733-760 (WMHNGYQFWVPQLSCGDQARDLRSPRIK) are Extracellular-facing. A helical transmembrane segment spans residues 761 to 782 (GFILWICVVLFAGSVISLGAII). At 783–813 (SAKPLDDLKYKLFSARENNVTSPYTSSVYLG) the chain is on the cytoplasmic side. The helical transmembrane segment at 814 to 834 (WAMSSGIALVVTAILPIVSWF) threads the bilayer. Residues 835–844 (ATYRFSHSSA) are Extracellular-facing. The chain crosses the membrane as a helical span at residues 845–865 (VCLMIFSVVLVAFCGTSYLEV). Residues 866-878 (VKSRDDQLPTKGD) lie on the Cytoplasmic side of the membrane. Residues 879-899 (FLAALLPLACIPALLSLCCGM) traverse the membrane as a helical segment. Topologically, residues 900–912 (VKWKDDCWILSRG) are extracellular. Residues 913 to 933 (VYVFFSIGLLLLFGAIAAVIA) traverse the membrane as a helical segment. Residues 934–936 (VKP) are Cytoplasmic-facing. The chain crosses the membrane as a helical span at residues 937 to 957 (WTIGVSFLLVLFLMVVTIGVI). Residues 958-971 (HLWASNNFYLTRKQ) are Extracellular-facing. Residues 972-992 (TSFVCFLALLLGLAAFLLGWH) traverse the membrane as a helical segment. The Cytoplasmic portion of the chain corresponds to 993–1006 (QDKAFAGASVGYFT). Residues 1007–1027 (FLSLLAGRALAVLLSPPIVVY) form a helical membrane-spanning segment. Residues 1028–1050 (SPRVLPVYVYDAHADCGKNVSAA) are Extracellular-facing. A helical transmembrane segment spans residues 1051 to 1071 (FLVLYGIALATEGWGVVASLI). Topologically, residues 1072–2151 (IYPPFAGAAV…TKASIVLEAL (1080 aa)) are cytoplasmic. Calpain catalytic domains lie at 1407-1600 (SGKH…DMID) and 1695-1997 (QFTD…CRVY). Residues C1761, H1919, and N1939 contribute to the active site.

The protein belongs to the peptidase C2 family. Post-translationally, autocatalytic proteolytic cleavage leading to the production of mainly cytoplasmic localized subproducts of about 85 and 120 kDa. Mostly expressed in meristems and organ primordia. Expressed at low levels in young and germinating seeds at 10 ppm and in seedling roots at 67 ppm. Present in most tissues at a low level.

Its subcellular location is the cell membrane. It localises to the endosome membrane. It is found in the endoplasmic reticulum membrane. The protein localises to the cytoplasm. Essential protease involved in epiderm development. Required for aleurone cell development in the endosperm probably by maintaining and restricting the aleurone and embryonic epidermal L1 cell-layer fates as well as meristems organization. Involved in the maintenance of adaxial/abaxial axis information in developing leaves, probably by regulating cell proliferation and expansion. Does not need calcium ions to be active. Required for the formation of giant cells in sepals by determining cell fate and promoting endoreplication. This is Calpain-type cysteine protease DEK1 from Arabidopsis thaliana (Mouse-ear cress).